The sequence spans 479 residues: F-box/LRR-repeat protein 16 (479 aa).

Positions Met1–Arg92 are disordered. Positions Cys47–Leu60 are enriched in pro residues. Arg92 carries the omega-N-methylarginine modification. The F-box domain maps to Pro94–Pro139. LRR repeat units lie at residues Asn321 to Ala342, Lys347 to Cys369, Arg373 to Ser394, Ser398 to Leu419, Asn423 to Val444, and Leu446 to Gln470.

As to quaternary structure, interacts with SKP1 and CUL1.

In terms of biological role, substrate-recognition component of the SCF (SKP1-CUL1-F-box protein)-type E3 ubiquitin ligase complex. In Mus musculus (Mouse), this protein is F-box/LRR-repeat protein 16 (Fbxl16).